Reading from the N-terminus, the 122-residue chain is uncharacterized protein (122 aa).

Transmembrane regions (helical) follow at residues 36-56 (SVRS…YSQF) and 72-92 (AVFL…FSTD).

The protein resides in the membrane. This is an uncharacterized protein from Saccharomyces cerevisiae (strain ATCC 204508 / S288c) (Baker's yeast).